We begin with the raw amino-acid sequence, 346 residues long: Annexin A1 (346 aa).

S5 carries the post-translational modification Phosphoserine; by TRPM7. An Isoglutamyl lysine isopeptide (Gln-Lys) (interchain with K-?) cross-link involves residue Q19. The residue at position 21 (Y21) is a Phosphotyrosine; by EGFR. At S27 the chain carries Phosphoserine; by PKC. S34 and S37 each carry phosphoserine. 4 Annexin repeats span residues 42–113 (FDAS…ALLK), 114–185 (TPAQ…SLAK), 197–269 (DLAD…AIVK), and 273–344 (STPA…ALCG). K58 carries the post-translational modification N6-acetyllysine. Residues G59, V60, E62, K97, L100, E105, M127, G129, G131, T132, and E134 each contribute to the Ca(2+) site. Position 136 is a phosphothreonine (T136). Positions 171, 210, and 213 each coordinate Ca(2+). Residue K214 forms a Glycyl lysine isopeptide (Lys-Gly) (interchain with G-Cter in SUMO1); alternate linkage. A Glycyl lysine isopeptide (Lys-Gly) (interchain with G-Cter in SUMO2); alternate cross-link involves residue K214. Position 215 (G215) interacts with Ca(2+). K239 is subject to N6-acetyllysine. Ca(2+) is bound by residues D253, E255, and L256. K257 is covalently cross-linked (Glycyl lysine isopeptide (Lys-Gly) (interchain with G-Cter in SUMO1)). Positions 261, 286, 288, and 290 each coordinate Ca(2+). An N6-acetyllysine modification is found at K312. A disulfide bond links C324 and C343. Residues L328, E330, and T331 each coordinate Ca(2+). A Glycyl lysine isopeptide (Lys-Gly) (interchain with G-Cter in SUMO1) cross-link involves residue K332. E336 is a Ca(2+) binding site.

This sequence belongs to the annexin family. Homodimer; non-covalently linked. Homodimer; linked by transglutamylation. Homodimers linked by transglutamylation are observed in placenta, but not in other tissues. Interacts with S100A11. Heterotetramer, formed by two molecules each of S100A11 and ANXA1. Interacts with DYSF. Interacts with EGFR. Post-translationally, phosphorylated by protein kinase C, EGFR and TRPM7. Phosphorylated in response to EGF treatment. Sumoylated. In terms of processing, proteolytically cleaved by cathepsin CTSG to release the active N-terminal peptide Ac2-26.

Its subcellular location is the nucleus. The protein localises to the cytoplasm. It localises to the cell projection. The protein resides in the cilium. It is found in the basolateral cell membrane. Its subcellular location is the lateral cell membrane. The protein localises to the cell membrane. It localises to the apical cell membrane. The protein resides in the membrane. It is found in the endosome membrane. Its subcellular location is the secreted. The protein localises to the extracellular space. It localises to the early endosome. The protein resides in the cytoplasmic vesicle membrane. It is found in the extracellular exosome. Its subcellular location is the cytoplasmic vesicle. The protein localises to the secretory vesicle lumen. It localises to the phagocytic cup. Functionally, plays important roles in the innate immune response as effector of glucocorticoid-mediated responses and regulator of the inflammatory process. Has anti-inflammatory activity. Plays a role in glucocorticoid-mediated down-regulation of the early phase of the inflammatory response. Contributes to the adaptive immune response by enhancing signaling cascades that are triggered by T-cell activation, regulates differentiation and proliferation of activated T-cells. Promotes the differentiation of T-cells into Th1 cells and negatively regulates differentiation into Th2 cells. Has no effect on unstimulated T-cells. Negatively regulates hormone exocytosis via activation of the formyl peptide receptors and reorganization of the actin cytoskeleton. Has high affinity for Ca(2+) and can bind up to eight Ca(2+) ions. Displays Ca(2+)-dependent binding to phospholipid membranes. Plays a role in the formation of phagocytic cups and phagosomes. Plays a role in phagocytosis by mediating the Ca(2+)-dependent interaction between phagosomes and the actin cytoskeleton. Functions at least in part by activating the formyl peptide receptors and downstream signaling cascades. Promotes chemotaxis of granulocytes and monocytes via activation of the formyl peptide receptors. Promotes rearrangement of the actin cytoskeleton, cell polarization and cell migration. Promotes resolution of inflammation and wound healing. Acts via neutrophil N-formyl peptide receptors to enhance the release of CXCL2. In Cavia cutleri (Guinea pig), this protein is Annexin A1 (ANXA1).